The following is a 314-amino-acid chain: Acetyl-coenzyme A carboxylase carboxyl transferase subunit beta (314 aa).

A CoA carboxyltransferase N-terminal domain is found at 37–307 (LWQKCPACDT…MSLPSIDSEA (271 aa)). The Zn(2+) site is built by Cys-41, Cys-44, Cys-60, and Cys-63. The C4-type zinc-finger motif lies at 41–63 (CPACDTLTYTKDLQQNWQVCPSC).

This sequence belongs to the AccD/PCCB family. As to quaternary structure, acetyl-CoA carboxylase is a heterohexamer composed of biotin carboxyl carrier protein (AccB), biotin carboxylase (AccC) and two subunits each of ACCase subunit alpha (AccA) and ACCase subunit beta (AccD). It depends on Zn(2+) as a cofactor.

The protein resides in the cytoplasm. It carries out the reaction N(6)-carboxybiotinyl-L-lysyl-[protein] + acetyl-CoA = N(6)-biotinyl-L-lysyl-[protein] + malonyl-CoA. The protein operates within lipid metabolism; malonyl-CoA biosynthesis; malonyl-CoA from acetyl-CoA: step 1/1. Functionally, component of the acetyl coenzyme A carboxylase (ACC) complex. Biotin carboxylase (BC) catalyzes the carboxylation of biotin on its carrier protein (BCCP) and then the CO(2) group is transferred by the transcarboxylase to acetyl-CoA to form malonyl-CoA. The protein is Acetyl-coenzyme A carboxylase carboxyl transferase subunit beta of Synechococcus sp. (strain JA-2-3B'a(2-13)) (Cyanobacteria bacterium Yellowstone B-Prime).